Consider the following 465-residue polypeptide: uncharacterized protein (465 aa).

The span at 1–15 shows a compositional bias: basic and acidic residues; the sequence is MEKNYIFENSIYKDE. Disordered regions lie at residues 1–31 and 288–320; these read MEKN…NNSS and QLEK…EQLP.

This is an uncharacterized protein from Dictyostelium discoideum (Social amoeba).